Here is a 417-residue protein sequence, read N- to C-terminus: Voltage-gated ClC-type chloride channel ClcB (417 aa).

Helical transmembrane passes span 5-25 (LLIA…FRHA), 54-74 (LITP…WQKM), 146-166 (LWIA…PLAG), 168-188 (LFIA…PVVI), 190-210 (AVVA…LYTV), 222-242 (AMII…MWLM), 258-278 (WQLA…PAVW), 288-308 (FLLS…KLLA), 316-336 (GAPG…GMLY), 339-359 (MWGF…LTGM), and 380-400 (MTGE…ASVL).

This sequence belongs to the chloride channel (TC 2.A.49) family. ClcB subfamily.

Its subcellular location is the cell inner membrane. Its function is as follows. Probably acts as an electrical shunt for an outwardly-directed proton pump that is linked to amino acid decarboxylation, as part of the extreme acid resistance (XAR) response. This is Voltage-gated ClC-type chloride channel ClcB from Citrobacter koseri (strain ATCC BAA-895 / CDC 4225-83 / SGSC4696).